Consider the following 265-residue polypeptide: Homeobox protein CDX-1 (265 aa).

Residues 9-153 (KDSPVYPGPA…GGGGSGKTRT (145 aa)) form a disordered region. Over residues 30–42 (YGPPAPPPAPPQY) the composition is skewed to pro residues. A compositionally biased stretch (low complexity) spans 73 to 92 (AAAYGPGPAAPAASPASLAF). Pro residues predominate over residues 93-108 (GPPPDFSPVPAPPGPG). Residues 110–126 (GLLAQPLGGPGTPSSPG) show a composition bias toward low complexity. Residues 154–213 (KDKYRVVYTDHQRLELEKEFHYSRYITIRRKSELAANLGLTERQVKIWFQNRRAKERKVN) constitute a DNA-binding region (homeobox). The tract at residues 157–178 (YRVVYTDHQRLELEKEFHYSRY) is interaction with DNA. The interaction with 5-mCpG DNA stretch occupies residues 196-207 (RQVKIWFQNRRA). Basic residues predominate over residues 207–217 (AKERKVNKKKQ). The interval 207 to 265 (AKERKVNKKKQQQQQPPQPPMAHDITATPAGPSLGGLCPSNTSLLATSSPMPVKEEFLP) is disordered. The span at 245 to 256 (PSNTSLLATSSP) shows a compositional bias: polar residues.

It belongs to the Caudal homeobox family. In terms of tissue distribution, intestinal epithelium.

The protein resides in the nucleus. Functionally, plays a role in transcriptional regulation. Involved in activated KRAS-mediated transcriptional activation of PRKD1 in colorectal cancer (CRC) cells. Binds to the PRKD1 promoter in colorectal cancer (CRC) cells. Could play a role in the terminal differentiation of the intestine. Binds preferentially to methylated DNA. This chain is Homeobox protein CDX-1 (CDX1), found in Homo sapiens (Human).